The chain runs to 146 residues: Protein STIG1 (146 aa).

A signal peptide spans 1 to 23 (MAFINLLILIILTLSSTPITTMS). 3 N-linked (GlcNAc...) asparagine glycosylation sites follow: Asn-31, Asn-61, and Asn-84.

Belongs to the STIG1 family. In terms of processing, glycosylated. In terms of tissue distribution, expressed exclusively in the stigmatic secretory zone.

The protein localises to the secreted. Functionally, involved in the temporal regulation of the exudate secretion onto the stigma. The chain is Protein STIG1 from Nicotiana tabacum (Common tobacco).